The sequence spans 149 residues: Alpha-crystallin A chain (149 aa).

The region spanning 41–149 is the sHSP domain; it reads LFRSVLESGI…DASHGERPIP (109 aa). Residues H89, E91, H96, and H143 each coordinate Zn(2+).

Belongs to the small heat shock protein (HSP20) family. As to quaternary structure, heteropolymer composed of three CRYAA and one CRYAB subunits. Inter-subunit bridging via zinc ions enhances stability, which is crucial as there is no protein turn over in the lens. Can also form homodimers and homotetramers (dimers of dimers) which serve as the building blocks of homooligomers. Within homooligomers, the zinc-binding motif is created from residues of 3 different molecules. His-89 and Glu-91 from one molecule are ligands of the zinc ion, and His-96 and His-143 residues from additional molecules complete the site with tetrahedral coordination geometry. Part of a complex required for lens intermediate filament formation composed of BFSP1, BFSP2 and CRYAA.

The protein localises to the cytoplasm. Its subcellular location is the nucleus. Its function is as follows. Contributes to the transparency and refractive index of the lens. May act as a chaperone, preventing aggregation of various proteins under a wide range of stress conditions. The sequence is that of Alpha-crystallin A chain (CRYAA) from Columba livia (Rock dove).